Reading from the N-terminus, the 390-residue chain is Heat stress transcription factor B-2b (390 aa).

The segment at 165–212 is disordered; sequence TRDGSPVLSGEEQVISSSSSPEPPLVLPQAPSGSGSGGVASGDVGDEN. The stretch at 206–237 forms a coiled coil; sequence GDVGDENERLRRENAQLARELSQMRKLCNNIL. Positions 215-244 are hydrophobic repeat HR-A/B; it reads LRRENAQLARELSQMRKLCNNILLLMSKYA. The Nuclear localization signal motif lies at 318–322; the sequence is RKRMR. Positions 322-363 are disordered; it reads RHDGGGDDDHAATVKAEPMDGRPHGKDEQSAETQAWPIYRPR. Basic and acidic residues predominate over residues 323-350; that stretch reads HDGGGDDDHAATVKAEPMDGRPHGKDEQ.

It belongs to the HSF family. Class B subfamily. Homotrimer. In terms of processing, exhibits temperature-dependent phosphorylation.

The protein resides in the nucleus. Functionally, transcriptional regulator that specifically binds DNA of heat shock promoter elements (HSE). This Oryza sativa subsp. japonica (Rice) protein is Heat stress transcription factor B-2b (HSFB2B).